The primary structure comprises 386 residues: MLLPRCCWGRWLMGRRPRCSCQAPAGFDGKDGRGSRVREKPPWRVLFLGTDHFARETLRALHAARDGKEEKLIEKLEVVTVPSLSPKGLPVKQYAIQSQLPVYEWPDVGSGEYDVGVVASFGRLLSEALILKFPYGILNVHPSCLPRWRGPAPIIHTVLHGDTVTGVTIMQIRPKRFDIGPILQQETIPVPPKSTSKELEAVLSKLGANMLISVLKNLPESLNNGRPQPAEGVTYAPKVSAGTSCVKWEEQTSEQVLRLHLAIGDIVPLQTLWMENTVKLLDLVEVNNSILADPKLTGQTVTPGFVVYHRPSQMLLVRCKDGWIGVRSVMLKKTLTATDFYNGYLHAWYQKNSHAHPSQCRFQTLRLPTKMQQKTKLLLCNSALSS.

This sequence belongs to the Fmt family.

The protein resides in the mitochondrion. It catalyses the reaction L-methionyl-tRNA(fMet) + (6R)-10-formyltetrahydrofolate = N-formyl-L-methionyl-tRNA(fMet) + (6S)-5,6,7,8-tetrahydrofolate + H(+). Functionally, methionyl-tRNA formyltransferase that formylates methionyl-tRNA in mitochondria and is crucial for translation initiation. This Mus musculus (Mouse) protein is Methionyl-tRNA formyltransferase, mitochondrial (Mtfmt).